A 129-amino-acid chain; its full sequence is HTH-type transcriptional regulator HmrR (129 aa).

Residues 1 to 68 (MNIGEASERS…VEECRQLLAL (68 aa)) form the HTH merR-type domain. The H-T-H motif DNA-binding region spans 4-23 (GEASERSGLPSKTIRYYEDI).

In terms of assembly, homodimer.

The protein resides in the cytoplasm. Functionally, regulates the transcription of actP. It detects cytoplasmic copper stress and activates transcription in response to increasing copper concentrations. In the absence of copper, it negatively regulates the transcription of actP. This chain is HTH-type transcriptional regulator HmrR (hmrR), found in Rhizobium leguminosarum bv. viciae.